Reading from the N-terminus, the 262-residue chain is Putative hydro-lyase BLi00500/BL02808 (262 aa).

The protein belongs to the D-glutamate cyclase family.

The polypeptide is Putative hydro-lyase BLi00500/BL02808 (Bacillus licheniformis (strain ATCC 14580 / DSM 13 / JCM 2505 / CCUG 7422 / NBRC 12200 / NCIMB 9375 / NCTC 10341 / NRRL NRS-1264 / Gibson 46)).